A 434-amino-acid chain; its full sequence is GTPase Obg (434 aa).

The region spanning 1-158 is the Obg domain; it reads MFIDRAKIYV…RWLYLELKLL (158 aa). One can recognise an OBG-type G domain in the interval 159 to 328; it reads ADVGLLGLPN…LLELMEKYVK (170 aa). GTP-binding positions include 165–172, 190–194, 211–214, 280–283, and 309–311; these read GLPNAGKS, FTTKT, DIPG, NKID, and SAK. Ser-172 and Thr-192 together coordinate Mg(2+). An OCT domain is found at 347–425; the sequence is KQENKKQEIP…IGNYVFKYNS (79 aa).

This sequence belongs to the TRAFAC class OBG-HflX-like GTPase superfamily. OBG GTPase family. Monomer. It depends on Mg(2+) as a cofactor.

The protein localises to the cytoplasm. In terms of biological role, an essential GTPase which binds GTP, GDP and possibly (p)ppGpp with moderate affinity, with high nucleotide exchange rates and a fairly low GTP hydrolysis rate. Plays a role in control of the cell cycle, stress response, ribosome biogenesis and in those bacteria that undergo differentiation, in morphogenesis control. This chain is GTPase Obg, found in Dictyoglomus turgidum (strain DSM 6724 / Z-1310).